The chain runs to 327 residues: MQNVLKSFLTPKNIQVQTISPCHFRILLEPLERGFGHTLGNALRRILLSSMPGAAIVQAEIDGVLHEYSSIEGVREDVVDVLLNLKGVAIKLEGREDAKLTLHKKGAGTVTAGDIQTESGVKIVNPDHVIAHITKDGEINMTLKAAMGRGYEPSSARSTGDQSRSVGLLLLDASYSPIRRVTYSVENARVEKRTDLDKLIIDLETDGTLDPEEAIRFAAAVLQHQLAAFVDLKQESDRDGGGKEGKVNPLLLRPVEDLELTVRAANCLKAESINYIGDLVQCTENDLLKTPNLGKKSLLEIKSVLAQKGLSLGMDLKGWPPADLTDQ.

An alpha N-terminal domain (alpha-NTD) region spans residues 1-233 (MQNVLKSFLT…HQLAAFVDLK (233 aa)). Positions 247–327 (VNPLLLRPVE…GWPPADLTDQ (81 aa)) are alpha C-terminal domain (alpha-CTD).

The protein belongs to the RNA polymerase alpha chain family. As to quaternary structure, homodimer. The RNAP catalytic core consists of 2 alpha, 1 beta, 1 beta' and 1 omega subunit. When a sigma factor is associated with the core the holoenzyme is formed, which can initiate transcription.

The catalysed reaction is RNA(n) + a ribonucleoside 5'-triphosphate = RNA(n+1) + diphosphate. Functionally, DNA-dependent RNA polymerase catalyzes the transcription of DNA into RNA using the four ribonucleoside triphosphates as substrates. The sequence is that of DNA-directed RNA polymerase subunit alpha from Coxiella burnetii (strain CbuK_Q154) (Coxiella burnetii (strain Q154)).